We begin with the raw amino-acid sequence, 296 residues long: Nucleotide-binding protein Rmet_0297 (296 aa).

8-15 (GISGSGKS) lines the ATP pocket. Position 57 to 60 (57 to 60 (DIRS)) interacts with GTP.

Belongs to the RapZ-like family.

Displays ATPase and GTPase activities. This chain is Nucleotide-binding protein Rmet_0297, found in Cupriavidus metallidurans (strain ATCC 43123 / DSM 2839 / NBRC 102507 / CH34) (Ralstonia metallidurans).